The following is a 448-amino-acid chain: Tryptophan--tRNA ligase (448 aa).

ATP-binding positions include 10–12 and 18–19; these read TPT and GN. The 'HIGH' region signature appears at 11-19; that stretch reads PTGTPHLGN. Position 143 (aspartate 143) interacts with L-tryptophan. ATP-binding positions include 155–157, leucine 197, and 204–208; these read GRD and KMSKS. Positions 204–208 match the 'KMSKS' region motif; that stretch reads KMSKS.

The protein belongs to the class-I aminoacyl-tRNA synthetase family. In terms of assembly, homodimer.

The protein localises to the cytoplasm. It carries out the reaction tRNA(Trp) + L-tryptophan + ATP = L-tryptophyl-tRNA(Trp) + AMP + diphosphate + H(+). In terms of biological role, catalyzes the attachment of tryptophan to tRNA(Trp). This chain is Tryptophan--tRNA ligase, found in Pseudomonas aeruginosa (strain ATCC 15692 / DSM 22644 / CIP 104116 / JCM 14847 / LMG 12228 / 1C / PRS 101 / PAO1).